A 249-amino-acid polypeptide reads, in one-letter code: Ribosomal RNA small subunit methyltransferase G (249 aa).

3 residues coordinate S-adenosyl-L-methionine: G86, F91, and R178.

The protein belongs to the methyltransferase superfamily. RNA methyltransferase RsmG family.

The protein localises to the cytoplasm. Its function is as follows. Specifically methylates the N7 position of a guanine in 16S rRNA. In Bifidobacterium adolescentis (strain ATCC 15703 / DSM 20083 / NCTC 11814 / E194a), this protein is Ribosomal RNA small subunit methyltransferase G.